The sequence spans 485 residues: WAS/WASL-interacting protein family member 3 (485 aa).

The segment covering 1–41 has biased composition (pro residues); sequence MPVPPPPPPPPPPPPPPPPPLGAPPPPPLGAPPPPPPPGPP. The interval 1 to 485 is disordered; the sequence is MPVPPPPPPP…QLSLKALPVR (485 aa). 3 consecutive short sequence motifs (profilin-binding motif) follow at residues 3-8, 11-16, and 31-36; these read VPPPPP, PPPPPP, and APPPPP. A WH2 domain is found at 56–73; the sequence is GRSALLADIQQGTRLRKV. The residue at position 57 (R57) is an Asymmetric dimethylarginine. An RLRK motif is present at residues 69 to 72; the sequence is RLRK. Phosphoserine is present on S161. Pro residues predominate over residues 176 to 203; sequence PVPPRPSVPAPPPPTPPPPPPPPLPPAS. S211 is subject to Phosphoserine. Residues 212–246 show a composition bias toward pro residues; sequence PPAPPTKVNPSVVPPPLPCAPPLPPPPPTPPPLPP. Residues 247-262 are compositionally biased toward low complexity; that stretch reads ASALSDKAVRPQLAPL. Composition is skewed to pro residues over residues 263-278 and 296-312; these read HLPPIPPPLPLLPPCG and PPAPPPPPPPPPPPPLP. S392 is modified (phosphoserine). The span at 392–405 shows a compositional bias: polar residues; that stretch reads SPTTELSSKSQQPG. Over residues 415 to 439 the composition is skewed to basic and acidic residues; that stretch reads AIDDFESKFTFHSMEDFPPPDEYKP. The WASP-binding motif motif lies at 424-448; that stretch reads TFHSMEDFPPPDEYKPCQKIYPSKV.

As to quaternary structure, interacts with WASL, and monomeric and filamentous actin. Isoform 1 is expressed in brain and testis and isoform 2 is expressed only in brain (at protein level).

It is found in the cytoplasm. Functionally, may be a regulator of cytoskeletal organization (Potential). May have a role in spermatogenesis. The protein is WAS/WASL-interacting protein family member 3 (Wipf3) of Mus musculus (Mouse).